The following is a 634-amino-acid chain: Chaperone protein HtpG (634 aa).

An a; substrate-binding region spans residues M1 to R343. The b stretch occupies residues E344–R560. Residues I561–L634 are c.

This sequence belongs to the heat shock protein 90 family. As to quaternary structure, homodimer.

The protein localises to the cytoplasm. Molecular chaperone. Has ATPase activity. The sequence is that of Chaperone protein HtpG from Methylococcus capsulatus (strain ATCC 33009 / NCIMB 11132 / Bath).